Consider the following 651-residue polypeptide: Acetyl-coenzyme A synthetase (651 aa).

Residues 190-193 (RGGK), T312, and N336 each bind CoA. Residues 388–390 (GEP), 412–417 (DTWWQT), D501, and R516 each bind ATP. A CoA-binding site is contributed by S524. R527 is an ATP binding site. Residues V538, H540, and V543 each contribute to the Mg(2+) site. R585 serves as a coordination point for CoA. N6-acetyllysine is present on K610.

The protein belongs to the ATP-dependent AMP-binding enzyme family. It depends on Mg(2+) as a cofactor. Post-translationally, acetylated. Deacetylation by the SIR2-homolog deacetylase activates the enzyme.

The catalysed reaction is acetate + ATP + CoA = acetyl-CoA + AMP + diphosphate. Catalyzes the conversion of acetate into acetyl-CoA (AcCoA), an essential intermediate at the junction of anabolic and catabolic pathways. AcsA undergoes a two-step reaction. In the first half reaction, AcsA combines acetate with ATP to form acetyl-adenylate (AcAMP) intermediate. In the second half reaction, it can then transfer the acetyl group from AcAMP to the sulfhydryl group of CoA, forming the product AcCoA. The chain is Acetyl-coenzyme A synthetase from Mesorhizobium japonicum (strain LMG 29417 / CECT 9101 / MAFF 303099) (Mesorhizobium loti (strain MAFF 303099)).